The chain runs to 391 residues: Coiled-coil domain-containing protein 85C-A (391 aa).

Coiled-coil stretches lie at residues lysine 23 to cysteine 87 and phenylalanine 121 to isoleucine 146. Positions asparagine 154–threonine 212 are disordered. 2 stretches are compositionally biased toward low complexity: residues serine 158–serine 175 and aspartate 183–serine 195.

It belongs to the CCDC85 family.

It is found in the cell junction. The protein localises to the tight junction. Its subcellular location is the adherens junction. May play a role in cell-cell adhesion and epithelium development through its interaction with proteins of the beta-catenin family. May play an important role in cortical development, especially in the maintenance of radial glia. In Danio rerio (Zebrafish), this protein is Coiled-coil domain-containing protein 85C-A (ccdc85ca).